Consider the following 366-residue polypeptide: Nodulation protein NolL (366 aa).

The next 9 membrane-spanning stretches (helical) occupy residues 27-47 (FVKG…LVIY), 62-82 (IYMF…SGTI), 98-118 (LLIP…AAFF), 140-160 (FLWA…FNLL), 164-184 (ILCA…IVPL), 212-232 (HKSL…LDWG), 253-273 (VLLM…SLFH), 286-306 (LVAV…GAVF), and 324-344 (IVVA…VLWI).

The protein belongs to the acyltransferase 3 family.

It is found in the cell membrane. Thought to be an acetyltransferase that modifies the fucose of the nod factor. This Sinorhizobium fredii (strain NBRC 101917 / NGR234) protein is Nodulation protein NolL (nolL).